The primary structure comprises 29 residues: ATP synthase subunit 9, mitochondrial (29 aa).

The protein belongs to the ATPase C chain family. In terms of assembly, F-type ATPases have 2 components, CF(1) - the catalytic core - and CF(0) - the membrane proton channel. CF(1) has five subunits: alpha(3), beta(3), gamma(1), delta(1), epsilon(1). CF(0) has three main subunits: a, b and c.

It is found in the mitochondrion membrane. In terms of biological role, mitochondrial membrane ATP synthase (F(1)F(0) ATP synthase or Complex V) produces ATP from ADP in the presence of a proton gradient across the membrane which is generated by electron transport complexes of the respiratory chain. F-type ATPases consist of two structural domains, F(1) - containing the extramembraneous catalytic core and F(0) - containing the membrane proton channel, linked together by a central stalk and a peripheral stalk. During catalysis, ATP synthesis in the catalytic domain of F(1) is coupled via a rotary mechanism of the central stalk subunits to proton translocation. Part of the complex F(0) domain. A homomeric c-ring of probably 10 subunits is part of the complex rotary element. In Wickerhamomyces pijperi (Yeast), this protein is ATP synthase subunit 9, mitochondrial (ATP9).